The primary structure comprises 569 residues: Glutamate--tRNA ligase, chloroplastic/mitochondrial (569 aa).

59 to 61 (RFA) contacts L-glutamate. Positions 62–72 (PSPTGNLHVGG) match the 'HIGH' region motif. H69 lines the ATP pocket. L-glutamate-binding positions include E95, 247–251 (YNFCV), and R265. Residues E268 and 303–307 (KLSKR) contribute to the ATP site. Residues 303–307 (KLSKR) carry the 'KMSKS' region motif.

It belongs to the class-I aminoacyl-tRNA synthetase family. Glutamate--tRNA ligase type 1 subfamily.

It is found in the plastid. Its subcellular location is the chloroplast. It localises to the mitochondrion. The catalysed reaction is tRNA(Glu) + L-glutamate + ATP = L-glutamyl-tRNA(Glu) + AMP + diphosphate. Functionally, catalyzes the attachment of glutamate to tRNA(Glu) in a two-step reaction: glutamate is first activated by ATP to form Glu-AMP and then transferred to the acceptor end of tRNA(Glu). This chain is Glutamate--tRNA ligase, chloroplastic/mitochondrial, found in Nicotiana tabacum (Common tobacco).